The chain runs to 383 residues: MPAFKSRIESALADRKAQGLNRSINVVFSGNQSILECEGRRYINFSSNDYLGLANDQALVRAWQQGLSVYGSGSGASPMVTGFSAAHSNLEAALTEWLGYERAILFGSGFSANQALLLTLLEKSDVLIQDRLNHASLMEAGMLSPAKMKRFKHNDIAHLNSLLSSEDNHLVVTEGVFSMDGDCAPLADIAEVTSSHDAWFAVDDAHGIGVLGESGGGSCELAKVKPELLIVTFGKAFGMSGAAILCDHATGDFLTQFARHHVYSTAIPPAQAYALTHAVSMIQEQSWRREKLTELNEAYRDGLQDLDGFVETQTSIKPFMIGESELALQVASACRQNGIWVTAIRPPTVPKGTSRLRITLTANHTNEQIKTLSMALKQALGAL.

Residue Arg22 coordinates substrate. 109–110 contributes to the pyridoxal 5'-phosphate binding site; that stretch reads GF. Residue His134 participates in substrate binding. Pyridoxal 5'-phosphate is bound by residues Ser178, His206, and Thr232. Lys235 bears the N6-(pyridoxal phosphate)lysine mark. Thr348 serves as a coordination point for substrate.

This sequence belongs to the class-II pyridoxal-phosphate-dependent aminotransferase family. BioF subfamily. In terms of assembly, homodimer. The cofactor is pyridoxal 5'-phosphate.

The catalysed reaction is 6-carboxyhexanoyl-[ACP] + L-alanine + H(+) = (8S)-8-amino-7-oxononanoate + holo-[ACP] + CO2. It participates in cofactor biosynthesis; biotin biosynthesis. In terms of biological role, catalyzes the decarboxylative condensation of pimeloyl-[acyl-carrier protein] and L-alanine to produce 8-amino-7-oxononanoate (AON), [acyl-carrier protein], and carbon dioxide. This Vibrio campbellii (strain ATCC BAA-1116) protein is 8-amino-7-oxononanoate synthase.